The primary structure comprises 637 residues: 3D-(3,5/4)-trihydroxycyclohexane-1,2-dione hydrolase (637 aa).

Thiamine diphosphate is bound at residue glutamate 66. Residues 442-522 are thiamine pyrophosphate binding; that stretch reads SLPGDLQRLW…INVLLFDNSG (81 aa). 2 residues coordinate Mg(2+): aspartate 493 and asparagine 520.

The protein belongs to the TPP enzyme family. Requires Mg(2+) as cofactor. The cofactor is thiamine diphosphate.

It catalyses the reaction 3D-3,5/4-trihydroxycyclohexane-1,2-dione + H2O = 5-deoxy-D-glucuronate + H(+). It functions in the pathway polyol metabolism; myo-inositol degradation into acetyl-CoA; acetyl-CoA from myo-inositol: step 3/7. Functionally, involved in the cleavage of the C1-C2 bond of 3D-(3,5/4)-trihydroxycyclohexane-1,2-dione (THcHDO) to yield 5-deoxy-glucuronate (5DG). The protein is 3D-(3,5/4)-trihydroxycyclohexane-1,2-dione hydrolase (iolD) of Bacillus subtilis (strain 168).